A 335-amino-acid polypeptide reads, in one-letter code: BTB and MATH domain-containing protein 39 (335 aa).

Positions 14 to 141 (MKTLCFKIMN…NGVFTIEFDL (128 aa)) constitute an MATH domain. The BTB domain maps to 161-226 (ADGKLIVEDQ…LQLDEFKVNV (66 aa)).

The chain is BTB and MATH domain-containing protein 39 from Caenorhabditis briggsae.